The following is a 305-amino-acid chain: Sulfate adenylyltransferase subunit 2 (305 aa).

Belongs to the PAPS reductase family. CysD subfamily. As to quaternary structure, heterodimer composed of CysD, the smaller subunit, and CysN.

The enzyme catalyses sulfate + ATP + H(+) = adenosine 5'-phosphosulfate + diphosphate. The protein operates within sulfur metabolism; hydrogen sulfide biosynthesis; sulfite from sulfate: step 1/3. Functionally, with CysN forms the ATP sulfurylase (ATPS) that catalyzes the adenylation of sulfate producing adenosine 5'-phosphosulfate (APS) and diphosphate, the first enzymatic step in sulfur assimilation pathway. APS synthesis involves the formation of a high-energy phosphoric-sulfuric acid anhydride bond driven by GTP hydrolysis by CysN coupled to ATP hydrolysis by CysD. This is Sulfate adenylyltransferase subunit 2 from Myxococcus xanthus (strain DK1622).